The sequence spans 414 residues: uncharacterized protein (414 aa).

A disordered region spans residues 204-230 (LVGTPAPGPNGSNSDGDSERASQDVRD). Over residues 220–230 (DSERASQDVRD) the composition is skewed to basic and acidic residues.

This sequence belongs to the CdaR family.

This is an uncharacterized protein from Mycobacterium tuberculosis (strain CDC 1551 / Oshkosh).